We begin with the raw amino-acid sequence, 720 residues long: Proline-rich receptor-like protein kinase PERK12 (720 aa).

The segment at 1–240 (MSDLGESPSS…GNGDGGGGGG (240 aa)) is disordered. The Extracellular segment spans residues 1–246 (MSDLGESPSS…GGGGGYQGKT (246 aa)). The segment covering 10–25 (SSPPAPPADTAPPPET) has biased composition (pro residues). Residues 26-35 (PSENSALPPV) show a composition bias toward low complexity. 2 stretches are compositionally biased toward pro residues: residues 52-84 (LSEP…PSDS) and 92-116 (PSPP…PAPP). N-linked (GlcNAc...) asparagine glycosylation occurs at Asn117. 2 stretches are compositionally biased toward pro residues: residues 123–138 (NPPP…PSSP) and 147–207 (PESP…PPKT). A helical membrane pass occupies residues 247–267 (MVGMAVAGFAIMALIGVVFLV). Residues 268–720 (RRKKKRNIDS…ETRPFNNRRF (453 aa)) are Cytoplasmic-facing. The segment at 300–349 (QDPGKGYSSGPNGSMYNNSQQQQSSMGNSYGTAGGGYPHHQMQSSGTPDS) is disordered. A compositionally biased stretch (low complexity) spans 311-330 (NGSMYNNSQQQQSSMGNSYG). Residues 371–624 (FARKNILGEG…EVFRMIETAA (254 aa)) enclose the Protein kinase domain. ATP-binding positions include 377–385 (LGEGGFGCV) and Lys399. Tyr444 is modified (phosphotyrosine). Catalysis depends on Asp495, which acts as the Proton acceptor. Ser528 is subject to Phosphoserine. 2 positions are modified to phosphothreonine: Thr529 and Thr534. Tyr542 carries the phosphotyrosine modification. Positions 698 to 720 (SAKSSSDFSGNESETRPFNNRRF) are disordered.

This sequence belongs to the protein kinase superfamily. Ser/Thr protein kinase family. As to expression, mostly expressed in apical parts, including flower buds, and particularly in anthers. Also present in root hairs.

It localises to the cell membrane. The catalysed reaction is L-seryl-[protein] + ATP = O-phospho-L-seryl-[protein] + ADP + H(+). The enzyme catalyses L-threonyl-[protein] + ATP = O-phospho-L-threonyl-[protein] + ADP + H(+). Its function is as follows. Regulates the auxin-related MAX (More Axillary Growth) pathway during the shoot branching. The chain is Proline-rich receptor-like protein kinase PERK12 (PERK12) from Arabidopsis thaliana (Mouse-ear cress).